The primary structure comprises 135 residues: Putative large ribosomal subunit protein eL32' (135 aa).

The protein belongs to the eukaryotic ribosomal protein eL32 family.

This Mus musculus (Mouse) protein is Putative large ribosomal subunit protein eL32' (Rpl32-ps).